Reading from the N-terminus, the 415-residue chain is Cyclin-A2 (415 aa).

This sequence belongs to the cyclin family. Cyclin AB subfamily. As to quaternary structure, interacts with the CDK1 and CDK2 protein kinases to form serine/threonine kinase holoenzyme complexes. Ubiquitous.

Its subcellular location is the nucleus. It localises to the cytoplasm. Its function is as follows. Cyclin which controls both the G1/S and the G2/M transition phases of the cell cycle. Functions through the formation of specific serine/threonine kinase holoenzyme complexes with the cyclin-dependent protein kinases CDK1 and CDK2. The cyclin subunit confers the substrate specificity of these complexes and differentially interacts with and activates CDK1 and CDK2 throughout the cell cycle. The chain is Cyclin-A2 (ccna2) from Xenopus laevis (African clawed frog).